The primary structure comprises 390 residues: Tumor susceptibility gene 101 protein (390 aa).

The residue at position 2 (A2) is an N-acetylalanine. The region spanning 2 to 145 (AVSESQLKKM…GDEPPVFSRP (144 aa)) is the UEV domain. The interval 158 to 162 (PPNTS) is interaction with CEP55. Residues 198-214 (ATTSSQYPSQPPVTTVG) are compositionally biased toward polar residues. The tract at residues 198-220 (ATTSSQYPSQPPVTTVGPSRDGT) is disordered. At T220 the chain carries Phosphothreonine. The stretch at 235–316 (SDKLRWRMKE…NQSENNDIDE (82 aa)) forms a coiled coil. The PTAP motif motif lies at 320–323 (PTAP). Positions 322-390 (APLYKQILNL…RKTAGLSDLY (69 aa)) constitute an SB domain.

Belongs to the ubiquitin-conjugating enzyme family. UEV subfamily. As to quaternary structure, component of the ESCRT-I complex (endosomal sorting complex required for transport I) which consists of TSG101, VPS28, a VPS37 protein (VPS37A to -D) and MVB12A or MVB12B in a 1:1:1:1 stoichiometry. Interacts with VPS37A, VPS37B and VPS37C. Interacts with DMAP1. Interacts with ubiquitin. Interacts with stathmin, GMCL and AATF. Component of an ESCRT-I complex (endosomal sorting complex required for transport I) which consists of TSG101, VPS28, VPS37A and UBAP1 in a 1:1:1:1 stoichiometry. Interacts with HGS; the interaction mediates the association with the ESCRT-0 complex. Interacts with GGA1 and GGA3. Interacts (via UEV domain) with PDCD6IP/AIP1. Interacts with VPS28, SNF8 and VPS36. Self-associates. Interacts with MVB12A; the association appears to be mediated by the TSG101-VPS37 binary subcomplex. Interacts with VPS37D. Interacts with LRSAM1. Interacts with CEP55; the interaction is required for cytokinesis but not for viral budding. Interacts with PDCD6. Interacts with LITAF. Interacts with MGRN1. Interacts with ARRDC1; recruits TSG101 to the plasma membrane. In terms of assembly, (Microbial infection) Interacts with HIV-1 p6. (Microbial infection) Interacts with human spumavirus Gag. As to quaternary structure, (Microbial infection) Interacts with HTLV-1 Gag. In terms of assembly, (Microbial infection) Interacts with Ebola virus VP40. (Microbial infection) Interacts with EIAV p9; the interaction has been shown in vitro. As to quaternary structure, (Microbial infection) Interacts with Lassa virus protein Z. In terms of assembly, (Microbial infection) Interacts with hepatitis E virus protein ORF3. Post-translationally, monoubiquitinated at multiple sites by LRSAM1 and by MGRN1. Ubiquitination inactivates it, possibly by regulating its shuttling between an active membrane-bound protein and an inactive soluble form. Ubiquitination by MGRN1 requires the presence of UBE2D1. Heart, brain, placenta, lung, liver, skeletal, kidney and pancreas.

It localises to the cytoplasm. The protein localises to the early endosome membrane. Its subcellular location is the late endosome membrane. It is found in the cytoskeleton. The protein resides in the microtubule organizing center. It localises to the centrosome. The protein localises to the midbody. Its subcellular location is the midbody ring. It is found in the nucleus. In terms of biological role, component of the ESCRT-I complex, a regulator of vesicular trafficking process. Binds to ubiquitinated cargo proteins and is required for the sorting of endocytic ubiquitinated cargos into multivesicular bodies (MVBs). Mediates the association between the ESCRT-0 and ESCRT-I complex. Required for completion of cytokinesis; the function requires CEP55. May be involved in cell growth and differentiation. Acts as a negative growth regulator. Involved in the budding of many viruses through an interaction with viral proteins that contain a late-budding motif P-[ST]-A-P. This interaction is essential for viral particle budding of numerous retroviruses. Required for the exosomal release of SDCBP, CD63 and syndecan. It may also play a role in the extracellular release of microvesicles that differ from the exosomes. The sequence is that of Tumor susceptibility gene 101 protein (TSG101) from Homo sapiens (Human).